A 166-amino-acid polypeptide reads, in one-letter code: Protein-export protein SecB (166 aa).

It belongs to the SecB family. In terms of assembly, homotetramer, a dimer of dimers. One homotetramer interacts with 1 SecA dimer.

Its subcellular location is the cytoplasm. One of the proteins required for the normal export of preproteins out of the cell cytoplasm. It is a molecular chaperone that binds to a subset of precursor proteins, maintaining them in a translocation-competent state. It also specifically binds to its receptor SecA. This chain is Protein-export protein SecB, found in Rhizorhabdus wittichii (strain DSM 6014 / CCUG 31198 / JCM 15750 / NBRC 105917 / EY 4224 / RW1) (Sphingomonas wittichii).